The sequence spans 134 residues: Small ribosomal subunit protein uS11 (134 aa).

Belongs to the universal ribosomal protein uS11 family. Part of the 30S ribosomal subunit. Interacts with proteins S7 and S18. Binds to IF-3.

Located on the platform of the 30S subunit, it bridges several disparate RNA helices of the 16S rRNA. Forms part of the Shine-Dalgarno cleft in the 70S ribosome. This is Small ribosomal subunit protein uS11 from Janthinobacterium sp. (strain Marseille) (Minibacterium massiliensis).